We begin with the raw amino-acid sequence, 298 residues long: MFKENKVKLGIAPIGWTNDDMPELGGEITFEQCISEMALAGFVGCEVGNKYPRDTKILKKALSLRGLSIASAWFSAFLTSKPFEETAEAFKAHRDFLYEMGAKVIVVSEQGNSIQGQMETPLFDKKPVFTEEEWDLLIDGLNRLGDLAAEKGMNIVYHHHMGTGIQTTEEIDRLMEETDPKKVSLLYDTGHLVFSGEDHLHVLNKHINRIRHVHLKDVRIEVANKVREEKMSFLQAVKAGVFTVPGDGVIDFKPVFEALDAAGYEGWFVVEAEQDPAIANPFEYALKARQYIRETCGL.

This sequence belongs to the IolE/MocC family. The cofactor is glutathione. Co(2+) is required as a cofactor. Requires Mn(2+) as cofactor.

It carries out the reaction scyllo-inosose = 3D-3,5/4-trihydroxycyclohexane-1,2-dione + H2O. It functions in the pathway polyol metabolism; myo-inositol degradation into acetyl-CoA; acetyl-CoA from myo-inositol: step 2/7. Functionally, catalyzes the dehydration of inosose (2-keto-myo-inositol, 2KMI or 2,4,6/3,5-pentahydroxycyclohexanone) to 3D-(3,5/4)-trihydroxycyclohexane-1,2-dione (D-2,3-diketo-4-deoxy-epi-inositol). This is Inosose dehydratase from Geobacillus thermodenitrificans (strain NG80-2).